The sequence spans 244 residues: Prolactin-7D1 (244 aa).

A signal peptide spans 1 to 30 (MLPSLIQPCSSGTLLMLLMSNLFLWEKVSS). Cystine bridges form between cysteine 99–cysteine 215 and cysteine 232–cysteine 240.

Belongs to the somatotropin/prolactin family.

It localises to the secreted. The polypeptide is Prolactin-7D1 (Prl7d1) (Mus musculus (Mouse)).